Here is a 361-residue protein sequence, read N- to C-terminus: Phospho-N-acetylmuramoyl-pentapeptide-transferase (361 aa).

Helical transmembrane passes span 21 to 41 (YLTIRALLAMLSALFIGLMLG), 69 to 89 (VGTPTMGGILILFAFIVSILI), 93 to 113 (WSNIYLWIIIVTSIIFSAIGF), 131 to 151 (SIKFLTQSLSAIVISTWIILI), 168 to 188 (IILPLSVFDFLILSYFVIVGS), 200 to 220 (GLAIMSVILISGALAIFAYFS), 240 to 260 (LFIICAALIGSSLGFLWFNAY), 264 to 284 (IFMGDVGSLSLGAILAVIAIL), 289 to 309 (ILLFIMGGVFVAETLSVIIQV), and 338 to 358 (KIIVRFWIVTLILVLIGLASI).

This sequence belongs to the glycosyltransferase 4 family. MraY subfamily. It depends on Mg(2+) as a cofactor.

The protein resides in the cell inner membrane. It catalyses the reaction UDP-N-acetyl-alpha-D-muramoyl-L-alanyl-gamma-D-glutamyl-meso-2,6-diaminopimeloyl-D-alanyl-D-alanine + di-trans,octa-cis-undecaprenyl phosphate = di-trans,octa-cis-undecaprenyl diphospho-N-acetyl-alpha-D-muramoyl-L-alanyl-D-glutamyl-meso-2,6-diaminopimeloyl-D-alanyl-D-alanine + UMP. The protein operates within cell wall biogenesis; peptidoglycan biosynthesis. Catalyzes the initial step of the lipid cycle reactions in the biosynthesis of the cell wall peptidoglycan: transfers peptidoglycan precursor phospho-MurNAc-pentapeptide from UDP-MurNAc-pentapeptide onto the lipid carrier undecaprenyl phosphate, yielding undecaprenyl-pyrophosphoryl-MurNAc-pentapeptide, known as lipid I. This Vesicomyosocius okutanii subsp. Calyptogena okutanii (strain HA) protein is Phospho-N-acetylmuramoyl-pentapeptide-transferase.